The primary structure comprises 162 residues: NADH-quinone oxidoreductase subunit I 2 (162 aa).

4Fe-4S ferredoxin-type domains follow at residues 52-82 and 93-122; these read LRRY…IEAG and VRYD…EGPN. The [4Fe-4S] cluster site is built by Cys-62, Cys-65, Cys-68, Cys-72, Cys-102, Cys-105, Cys-108, and Cys-112.

The protein belongs to the complex I 23 kDa subunit family. In terms of assembly, NDH-1 is composed of 14 different subunits. Subunits NuoA, H, J, K, L, M, N constitute the membrane sector of the complex. The cofactor is [4Fe-4S] cluster.

It is found in the cell inner membrane. It carries out the reaction a quinone + NADH + 5 H(+)(in) = a quinol + NAD(+) + 4 H(+)(out). NDH-1 shuttles electrons from NADH, via FMN and iron-sulfur (Fe-S) centers, to quinones in the respiratory chain. The immediate electron acceptor for the enzyme in this species is believed to be ubiquinone. Couples the redox reaction to proton translocation (for every two electrons transferred, four hydrogen ions are translocated across the cytoplasmic membrane), and thus conserves the redox energy in a proton gradient. In Rhodopseudomonas palustris (strain BisB5), this protein is NADH-quinone oxidoreductase subunit I 2.